A 340-amino-acid chain; its full sequence is DNA-directed RNA polymerase subunit alpha (340 aa).

Positions 1–226 are alpha N-terminal domain (alpha-NTD); it reads MLIAQRPSLT…ELFGLARELN (226 aa). The alpha C-terminal domain (alpha-CTD) stretch occupies residues 243–340; the sequence is LAADLALPIE…DAGFVETEQY (98 aa).

The protein belongs to the RNA polymerase alpha chain family. Homodimer. The RNAP catalytic core consists of 2 alpha, 1 beta, 1 beta' and 1 omega subunit. When a sigma factor is associated with the core the holoenzyme is formed, which can initiate transcription. In terms of processing, the last 19 amino acids in the C-terminal part are cleaved in the spore.

It carries out the reaction RNA(n) + a ribonucleoside 5'-triphosphate = RNA(n+1) + diphosphate. Functionally, DNA-dependent RNA polymerase catalyzes the transcription of DNA into RNA using the four ribonucleoside triphosphates as substrates. This chain is DNA-directed RNA polymerase subunit alpha, found in Streptomyces granaticolor.